The sequence spans 278 residues: Polyamine aminopropyltransferase (278 aa).

A PABS domain is found at 5-238; the sequence is ELWFTEQQTP…GLWSFTLGSK (234 aa). An S-methyl-5'-thioadenosine-binding site is contributed by Q34. 2 residues coordinate spermidine: H65 and D89. S-methyl-5'-thioadenosine-binding positions include E109 and 140 to 141; that span reads DG. D158 (proton acceptor) is an active-site residue. Residue 158 to 161 coordinates spermidine; the sequence is DSTD. S-methyl-5'-thioadenosine is bound at residue P165.

It belongs to the spermidine/spermine synthase family. In terms of assembly, homodimer or homotetramer.

It is found in the cytoplasm. It carries out the reaction S-adenosyl 3-(methylsulfanyl)propylamine + putrescine = S-methyl-5'-thioadenosine + spermidine + H(+). The protein operates within amine and polyamine biosynthesis; spermidine biosynthesis; spermidine from putrescine: step 1/1. Functionally, catalyzes the irreversible transfer of a propylamine group from the amino donor S-adenosylmethioninamine (decarboxy-AdoMet) to putrescine (1,4-diaminobutane) to yield spermidine. The chain is Polyamine aminopropyltransferase from Caldicellulosiruptor bescii (strain ATCC BAA-1888 / DSM 6725 / KCTC 15123 / Z-1320) (Anaerocellum thermophilum).